The sequence spans 91 residues: HssA/B-like protein 52 (91 aa).

Disordered stretches follow at residues 1-20 (MTLFSSISSISNPMTSSKSS) and 72-91 (GGCGGSNGSMGGGNGSCCGI).

The protein belongs to the hssA/B family.

This Dictyostelium discoideum (Social amoeba) protein is HssA/B-like protein 52 (hssl52).